A 547-amino-acid chain; its full sequence is Cytochrome P450 monooxygenase 81 (547 aa).

2 consecutive transmembrane segments (helical) span residues 6–23 (IPTQ…LFLL) and 106–124 (AFFA…ATAG). Position 483 (C483) interacts with heme. N-linked (GlcNAc...) asparagine glycans are attached at residues N503 and N516.

Belongs to the cytochrome P450 family. Heme is required as a cofactor.

It is found in the membrane. The protein operates within secondary metabolite biosynthesis. Functionally, cytochrome P450 monooxygenase that is able to use dehydroabietic acid as a substrate for oxidation. This chain is Cytochrome P450 monooxygenase 81, found in Postia placenta (strain ATCC 44394 / Madison 698-R) (Brown rot fungus).